The sequence spans 1174 residues: Male determiner protein Mdmd(II) (1174 aa).

Over residues 1–15 the composition is skewed to basic and acidic residues; the sequence is MNATDAESRKPENKP. Disordered stretches follow at residues 1–51, 80–109, and 136–259; these read MNAT…SGQR, KDGS…HPVE, and KQLS…LRRS. Residues 16–35 are compositionally biased toward low complexity; that stretch reads SSESSSSGSTSGSSDGEVSS. The span at 36–47 shows a compositional bias: polar residues; the sequence is KTYFKNNKSKVL. Residues 80–92 show a composition bias toward basic and acidic residues; sequence KDGSNEMLPKEDS. A compositionally biased stretch (polar residues) spans 93–102; the sequence is INTNHNYTTD. Positions 138–153 are enriched in low complexity; that stretch reads LSAYRSRSRSTRLSYS. Residues 183 to 200 are compositionally biased toward basic and acidic residues; sequence HGRDSSTTKRSVSRDKDN. Residues 201–223 are compositionally biased toward basic residues; it reads RLRRRIGSSRSHTRSHSRFRRSE. Residues 235-259 are compositionally biased toward basic and acidic residues; the sequence is RSQERRHERRRSMSSDYERIALRRS. One can recognise an MIF4G domain in the interval 348–531; it reads KKYIHGYINK…KVLFQVRRDG (184 aa). Residues 597 to 608 show a composition bias toward low complexity; the sequence is DSDGSFGSGSNS. Positions 597 to 616 are disordered; it reads DSDGSFGSGSNSETALSDCD. An MI domain is found at 641-757; that stretch reads ALRRTIYLTL…SWDVLDCIKL (117 aa). Low complexity predominate over residues 840–857; it reads SAPSSSSSSSLSSELSAP. Disordered regions lie at residues 840 to 1045 and 1095 to 1133; these read SAPS…SRTK and RKDN…NHSR. A compositionally biased stretch (basic residues) spans 869 to 909; it reads KKKHKGKNKKMTKKKNPSKKKEKTKKIVGKNKIAAKNKTIK. Residues 910–924 show a composition bias toward basic and acidic residues; sequence RRTDKDNSSSKDNFL. Positions 926–957 are enriched in low complexity; it reads SESSSNESISLDSLSSELFAPSSYSSSESSND. The span at 963–1001 shows a compositional bias: basic residues; that stretch reads KHKGKNKKMTKKKNPSNKREKTKKKLSKNKKAPNKNTKK. Positions 1010–1020 are enriched in low complexity; it reads SSESSISESKS. Residues 1034-1045 are compositionally biased toward basic residues; that stretch reads RKKRVTSKSRTK. Residues 1095–1118 show a composition bias toward basic and acidic residues; it reads RKDNYGNRQNHEISQRHDSEIKRR. Positions 1119–1130 are enriched in basic residues; that stretch reads REERKKRHHEKN.

Belongs to the CWC22 family. As to quaternary structure, component of the spliceosome C complex.

The protein localises to the nucleus speckle. In terms of biological role, male determiner protein (M-factor) that controls male somatic sexual differentiation. Acts as a dominant factor that regulates the mRNA splicing of transformer (tra) and doublesex (dsx) transcripts and promotes expression of male splice forms of tra and dsx. Probably acts as a component of the spliceosome C complex required for mRNA splicing factor and exon-junction complex (EJC) assembly. Hinders eIF4AIII from non-specifically binding RNA and escorts it to the splicing machinery to promote EJC assembly on mature mRNAs. The sequence is that of Male determiner protein Mdmd(II) from Musca domestica (House fly).